The sequence spans 542 residues: Mitochondrial distribution and morphology protein 34 (542 aa).

The 216-residue stretch at 1–216 (MSFRFNKGAF…LPSVIFSMSQ (216 aa)) folds into the SMP-LTD domain. Disordered regions lie at residues 27 to 58 (LNSK…TRGP) and 372 to 435 (SSGD…TTAV). Residues 31–48 (TQSSSQTAPANTTNSAAT) show a composition bias toward low complexity. Residues 49–58 (DEVKQETRGP) show a composition bias toward basic and acidic residues. Over residues 379–394 (IRRRKIKMGKKSKSKK) the composition is skewed to basic residues. The span at 403 to 414 (SSPTVVMPSSPS) shows a compositional bias: low complexity.

This sequence belongs to the MDM34 family. Component of the ER-mitochondria encounter structure (ERMES) or MDM complex, composed of MMM1, MDM10, MDM12 and MDM34.

The protein resides in the mitochondrion outer membrane. Component of the ERMES/MDM complex, which serves as a molecular tether to connect the endoplasmic reticulum (ER) and mitochondria. Components of this complex are involved in the control of mitochondrial shape and protein biogenesis, and function in nonvesicular lipid trafficking between the ER and mitochondria. MDM34 is required for the interaction of the ER-resident membrane protein MMM1 and the outer mitochondrial membrane-resident beta-barrel protein MDM10. The polypeptide is Mitochondrial distribution and morphology protein 34 (Lachancea thermotolerans (strain ATCC 56472 / CBS 6340 / NRRL Y-8284) (Yeast)).